Here is a 592-residue protein sequence, read N- to C-terminus: Aspartate--tRNA(Asp/Asn) ligase (592 aa).

Glu-176 is a binding site for L-aspartate. Residues 200–203 (QLYK) form an aspartate region. Residue Arg-222 participates in L-aspartate binding. Residues 222-224 (RDE) and Gln-231 each bind ATP. L-aspartate is bound at residue His-452. Glu-486 is a binding site for ATP. Residue Arg-493 coordinates L-aspartate. 538 to 541 (GVDR) contributes to the ATP binding site.

Belongs to the class-II aminoacyl-tRNA synthetase family. Type 1 subfamily. Homodimer.

It is found in the cytoplasm. The catalysed reaction is tRNA(Asx) + L-aspartate + ATP = L-aspartyl-tRNA(Asx) + AMP + diphosphate. Functionally, aspartyl-tRNA synthetase with relaxed tRNA specificity since it is able to aspartylate not only its cognate tRNA(Asp) but also tRNA(Asn). Reaction proceeds in two steps: L-aspartate is first activated by ATP to form Asp-AMP and then transferred to the acceptor end of tRNA(Asp/Asn). The protein is Aspartate--tRNA(Asp/Asn) ligase of Rhodopirellula baltica (strain DSM 10527 / NCIMB 13988 / SH1).